A 182-amino-acid polypeptide reads, in one-letter code: Ribosome-recycling factor (182 aa).

The protein belongs to the RRF family.

It localises to the cytoplasm. Responsible for the release of ribosomes from messenger RNA at the termination of protein biosynthesis. May increase the efficiency of translation by recycling ribosomes from one round of translation to another. This Gloeothece citriformis (strain PCC 7424) (Cyanothece sp. (strain PCC 7424)) protein is Ribosome-recycling factor.